The sequence spans 172 residues: MRAVFPGRFQPFHLGHLAVIEWLLSKYDELIIVVGSGKDSHTIYNPFTAGERILMIKKGLKEFNVDFTRVIFFPIMDSFTSGLWIRNLELYSPKFDVVVSGNPLVISDAREAGYIVDLPPMFNREMYNATKIRKLMLENNESWSELVPKSVYSFIKEIKGDERLRDIARNDY.

The protein belongs to the archaeal NMN adenylyltransferase family.

The protein localises to the cytoplasm. The enzyme catalyses beta-nicotinamide D-ribonucleotide + ATP + H(+) = diphosphate + NAD(+). It participates in cofactor biosynthesis; NAD(+) biosynthesis; NAD(+) from nicotinamide D-ribonucleotide: step 1/1. The protein is Nicotinamide-nucleotide adenylyltransferase of Sulfurisphaera tokodaii (strain DSM 16993 / JCM 10545 / NBRC 100140 / 7) (Sulfolobus tokodaii).